We begin with the raw amino-acid sequence, 160 residues long: Bursicon (160 aa).

An N-terminal signal peptide occupies residues 1 to 20 (MSVLNTFLVIVALILCYVND). Positions 38-131 (CQECQMTAVI…PLQCMCRPCG (94 aa)) constitute a CTCK domain. 5 cysteine pairs are disulfide-bonded: cysteine 41/cysteine 90, cysteine 55/cysteine 104, cysteine 65/cysteine 125, cysteine 69/cysteine 127, and cysteine 87/cysteine 130.

As to quaternary structure, heterodimer of burs and pburs.

The protein resides in the secreted. Final heterodimeric neurohormone released at the end of the molting cycle, involved in the sclerotization (tanning) of the insect cuticle, melanization and wing spreading. The sequence is that of Bursicon from Bombyx mori (Silk moth).